Reading from the N-terminus, the 367-residue chain is GPN-loop GTPase 1 (367 aa).

Residues G15–T22 and G18–T23 contribute to the GTP site. Residues G75–N77 carry the Gly-Pro-Asn (GPN)-loop; involved in dimer interface motif. N178–D181 lines the GTP pocket. Residues E247–L290 are a coiled coil. The disordered stretch occupies residues V306–A332. Phosphoserine is present on S311. Over residues D312 to A332 the composition is skewed to acidic residues.

The protein belongs to the GPN-loop GTPase family. In terms of assembly, heterodimers with gpn2 or fet5/gpn3. Binds to RNA polymerase II (RNAPII).

It localises to the cytoplasm. Small GTPase required for proper nuclear import of RNA polymerase II (RNAPII). May act at an RNAP assembly step prior to nuclear import. In Schizosaccharomyces pombe (strain 972 / ATCC 24843) (Fission yeast), this protein is GPN-loop GTPase 1.